Here is a 347-residue protein sequence, read N- to C-terminus: Phosphoribosylformylglycinamidine cyclo-ligase (347 aa).

Belongs to the AIR synthase family.

The protein resides in the cytoplasm. The enzyme catalyses 2-formamido-N(1)-(5-O-phospho-beta-D-ribosyl)acetamidine + ATP = 5-amino-1-(5-phospho-beta-D-ribosyl)imidazole + ADP + phosphate + H(+). The protein operates within purine metabolism; IMP biosynthesis via de novo pathway; 5-amino-1-(5-phospho-D-ribosyl)imidazole from N(2)-formyl-N(1)-(5-phospho-D-ribosyl)glycinamide: step 2/2. The sequence is that of Phosphoribosylformylglycinamidine cyclo-ligase from Prochlorococcus marinus (strain MIT 9215).